The chain runs to 323 residues: Viral cathepsin (323 aa).

The signal sequence occupies residues 1 to 16 (MNKILFYLFVYGVVNS). A propeptide spans 17 to 112 (AAYDLLKAPN…IVLDQPPGKG (96 aa)) (activation peptide). 3 cysteine pairs are disulfide-bonded: Cys-133/Cys-174, Cys-167/Cys-207, and Cys-262/Cys-310. Cys-136 is an active-site residue. The N-linked (GlcNAc...) asparagine; by host glycan is linked to Asn-158. Residues His-269 and Asn-289 contribute to the active site.

Belongs to the peptidase C1 family. In terms of assembly, interacts with chitinase/CHIA; this interaction maintains VCATH in the host endoplasmic reticulum. In terms of processing, synthesized as an inactive proenzyme and activated by proteolytic removal of the inhibitory propeptide.

The protein resides in the host endoplasmic reticulum. It catalyses the reaction Endopeptidase of broad specificity, hydrolyzing substrates of both cathepsin L and cathepsin B.. Its function is as follows. Cysteine protease that plays an essential role in host liquefaction to facilitate horizontal transmission of the virus. Accumulates within infected cells as an inactive proenzyme (proV-CATH), which is activated by proteolytic cleavage upon cell death. In Lepidoptera (butterflies and moths), this protein is Viral cathepsin (VCATH).